The following is a 146-amino-acid chain: Snaclec jerdonibitin subunit beta (146 aa).

Residues 1–23 (MGRFIFVSFGLLVVFLSLSGTGA) form the signal peptide. 3 cysteine pairs are disulfide-bonded: C25/C36, C53/C142, and C119/C134. Residues 32–143 (YEGHCYRVFQ…CSKTYPFVCK (112 aa)) enclose the C-type lectin domain.

It belongs to the snaclec family. In terms of assembly, heterodimer of subunits alpha and beta; disulfide-linked. As to expression, expressed by the venom gland.

The protein resides in the secreted. Snaclec that dose-dependently inhibits platelet aggregation induced by ristocetin or low-dose thrombin, but not by high-dose thrombin. Binds to GPIbalpha (GP1BA). In vivo, also dose-dependently induces thrombocytopenia of mice and platelet counts remains at very low level even after 18 hours intravenous injection. The protein is Snaclec jerdonibitin subunit beta of Protobothrops jerdonii (Jerdon's pitviper).